Consider the following 146-residue polypeptide: Ribonuclease P protein component (146 aa).

The protein belongs to the RnpA family. Consists of a catalytic RNA component (M1 or rnpB) and a protein subunit.

The enzyme catalyses Endonucleolytic cleavage of RNA, removing 5'-extranucleotides from tRNA precursor.. RNaseP catalyzes the removal of the 5'-leader sequence from pre-tRNA to produce the mature 5'-terminus. It can also cleave other RNA substrates such as 4.5S RNA. The protein component plays an auxiliary but essential role in vivo by binding to the 5'-leader sequence and broadening the substrate specificity of the ribozyme. This is Ribonuclease P protein component from Helicobacter hepaticus (strain ATCC 51449 / 3B1).